The sequence spans 293 residues: 4-diphosphocytidyl-2-C-methyl-D-erythritol kinase (293 aa).

The active site involves Lys10. 96–106 (PVASGIGGGSS) contacts ATP. Residue Asp138 is part of the active site.

It belongs to the GHMP kinase family. IspE subfamily.

It catalyses the reaction 4-CDP-2-C-methyl-D-erythritol + ATP = 4-CDP-2-C-methyl-D-erythritol 2-phosphate + ADP + H(+). It participates in isoprenoid biosynthesis; isopentenyl diphosphate biosynthesis via DXP pathway; isopentenyl diphosphate from 1-deoxy-D-xylulose 5-phosphate: step 3/6. Functionally, catalyzes the phosphorylation of the position 2 hydroxy group of 4-diphosphocytidyl-2C-methyl-D-erythritol. The sequence is that of 4-diphosphocytidyl-2-C-methyl-D-erythritol kinase from Chelativorans sp. (strain BNC1).